The primary structure comprises 164 residues: 6,7-dimethyl-8-ribityllumazine synthase (164 aa).

5-amino-6-(D-ribitylamino)uracil is bound by residues Y27, 58-60 (ALE), and 87-89 (CVI). 92-93 (ET) is a (2S)-2-hydroxy-3-oxobutyl phosphate binding site. Residue H95 is the Proton donor of the active site. A 5-amino-6-(D-ribitylamino)uracil-binding site is contributed by N120. (2S)-2-hydroxy-3-oxobutyl phosphate is bound at residue R134.

It belongs to the DMRL synthase family.

The catalysed reaction is (2S)-2-hydroxy-3-oxobutyl phosphate + 5-amino-6-(D-ribitylamino)uracil = 6,7-dimethyl-8-(1-D-ribityl)lumazine + phosphate + 2 H2O + H(+). It functions in the pathway cofactor biosynthesis; riboflavin biosynthesis; riboflavin from 2-hydroxy-3-oxobutyl phosphate and 5-amino-6-(D-ribitylamino)uracil: step 1/2. Functionally, catalyzes the formation of 6,7-dimethyl-8-ribityllumazine by condensation of 5-amino-6-(D-ribitylamino)uracil with 3,4-dihydroxy-2-butanone 4-phosphate. This is the penultimate step in the biosynthesis of riboflavin. In Methylocella silvestris (strain DSM 15510 / CIP 108128 / LMG 27833 / NCIMB 13906 / BL2), this protein is 6,7-dimethyl-8-ribityllumazine synthase.